Reading from the N-terminus, the 172-residue chain is Adenine phosphoribosyltransferase (172 aa).

This sequence belongs to the purine/pyrimidine phosphoribosyltransferase family. As to quaternary structure, homodimer.

It localises to the cytoplasm. It carries out the reaction AMP + diphosphate = 5-phospho-alpha-D-ribose 1-diphosphate + adenine. It functions in the pathway purine metabolism; AMP biosynthesis via salvage pathway; AMP from adenine: step 1/1. In terms of biological role, catalyzes a salvage reaction resulting in the formation of AMP, that is energically less costly than de novo synthesis. The polypeptide is Adenine phosphoribosyltransferase (Trichormus variabilis (strain ATCC 29413 / PCC 7937) (Anabaena variabilis)).